The sequence spans 245 residues: Carbohydrate deacetylase (245 aa).

Positions 59 and 121 each coordinate Mg(2+).

The protein belongs to the YdjC deacetylase family. As to quaternary structure, homodimer. Mg(2+) serves as cofactor.

Its function is as follows. Probably catalyzes the deacetylation of acetylated carbohydrates an important step in the degradation of oligosaccharides. This is Carbohydrate deacetylase from Clostridium beijerinckii (strain ATCC 51743 / NCIMB 8052) (Clostridium acetobutylicum).